The chain runs to 625 residues: Procollagen galactosyltransferase 2 (625 aa).

A signal peptide spans 1–26 (MAARLATVACALFLLSSALLRLGCRA). 4 N-linked (GlcNAc...) asparagine glycosylation sites follow: N96, N184, N381, and N579. The interval 597–625 (QGHIRSTAKNTEALPPPTSLDTVPSRDEL) is disordered. The Prevents secretion from ER motif lies at 622-625 (RDEL).

The protein belongs to the glycosyltransferase 25 family.

It is found in the endoplasmic reticulum lumen. The catalysed reaction is (5R)-5-hydroxy-L-lysyl-[collagen] + UDP-alpha-D-galactose = (5R)-5-O-(beta-D-galactosyl)-5-hydroxy-L-lysyl-[collagen] + UDP + H(+). Functionally, beta-galactosyltransferase that transfers beta-galactose to hydroxylysine residues of collagen. The polypeptide is Procollagen galactosyltransferase 2 (Colgalt2) (Mus musculus (Mouse)).